The sequence spans 326 residues: Cytosolic sulfotransferase 12 (326 aa).

3'-phosphoadenylyl sulfate is bound at residue 75 to 80 (KSGTTW). H140 acts as the Proton acceptor in catalysis. Residues R162, S170, Y228, and 290–292 (RKG) contribute to the 3'-phosphoadenylyl sulfate site.

It belongs to the sulfotransferase 1 family. In terms of assembly, dimer. As to expression, expressed in the aerial parts of seedlings, in roots, leaves and flowers. Not detected in stems and siliques.

It is found in the cytoplasm. Sulfotransferase that utilizes 3'-phospho-5'-adenylyl sulfate (PAPS) as sulfonate donor to catalyze the stereospecific sulfate conjugation of 24-epibrassinosteroids. Preferred substrates are 24-epicathasterone and 6-deoxo-24-epicathasterone. Low activity with 22-deoxy-24-epiteasterone. No activity with 24-epimers catasterone and brassinolide. Sulfonates salicylic acid. May be involved in detoxification. Enhances plant response to pathogen infection and contributes to long distance signaling in systemic acquired resistance (SAR). This Arabidopsis thaliana (Mouse-ear cress) protein is Cytosolic sulfotransferase 12 (SOT12).